The primary structure comprises 225 residues: Venom allergen 5 (225 aa).

The first 23 residues, 1–23, serve as a signal peptide directing secretion; sequence MKISGFVYLILITTIINLSFSEA. 4 disulfides stabilise this stretch: Cys-27–Cys-39, Cys-31–Cys-124, Cys-49–Cys-117, and Cys-191–Cys-208. Positions 69–210 constitute an SCP domain; the sequence is KQHNEFRQKV…WHRHYLVCNY (142 aa).

The protein belongs to the CRISP family. Venom allergen 5-like subfamily. As to expression, expressed by the venom gland.

Its subcellular location is the secreted. The chain is Venom allergen 5 from Vespa magnifica (Hornet).